The primary structure comprises 113 residues: MAKIQFSRGLDEVVIPEVRLTRSRTGDSGTATFIFTNPKILDQGSTEDITGMYLSDEEGEIITREVKAKFVNGKPEALEALYVMKSAQEWDRFMRFMERYAEENDLGLSKAEK.

This sequence belongs to the Psb28 family. Part of the photosystem II complex.

It localises to the cellular thylakoid membrane. This chain is Photosystem II reaction center Psb28 protein, found in Nostoc punctiforme (strain ATCC 29133 / PCC 73102).